The following is a 20-amino-acid chain: Trypsin inhibitor A chain (20 aa).

Belongs to the protease inhibitor I3 (leguminous Kunitz-type inhibitor) family. Heterodimer of an 'A' and a 'B' chain linked by a disulfide bond.

Its function is as follows. Inhibits trypsin and alpha-chymotrypsin. The chain is Trypsin inhibitor A chain from Albizia julibrissin (Silk tree).